Consider the following 816-residue polypeptide: Fibroblast growth factor receptor (816 aa).

The N-terminal stretch at 1–19 (MISDWCVVLVLLMSRLVFG) is a signal peptide. Residues 20–370 (LNFTEPVNYI…YKEESVEKTV (351 aa)) lie on the Extracellular side of the membrane. Residues Asn21, Asn69, Asn119, Asn156, Asn171, Asn244, Asn274, Asn313, and Asn321 are each glycosylated (N-linked (GlcNAc...) asparagine). The 81-residue stretch at 25–105 (PVNYILKLGE…VTAMNEESVQ (81 aa)) folds into the Ig-like C2-type 1 domain. Cys43 and Cys94 are oxidised to a cystine. One can recognise an Ig-like C2-type 2 domain in the interval 126 to 217 (LRIKNDISLL…GKIEHIMTVE (92 aa)). Cys147 and Cys201 are oxidised to a cystine. A helical membrane pass occupies residues 371-391 (IFIVITSMLAGLIFVAFVIFF). Residues 392 to 816 (ICRVRSKDKF…DILLSHYAVS (425 aa)) lie on the Cytoplasmic side of the membrane. The Protein kinase domain maps to 474–747 (LETDCLLGEG…QLIEDLERML (274 aa)). ATP is bound by residues 480-488 (LGEGAFGRV) and Lys508. The active-site Proton acceptor is the Asp612. Tyr643 bears the Phosphotyrosine; by autocatalysis mark.

It belongs to the protein kinase superfamily. Tyr protein kinase family. Fibroblast growth factor receptor subfamily.

It is found in the membrane. The enzyme catalyses L-tyrosyl-[protein] + ATP = O-phospho-L-tyrosyl-[protein] + ADP + H(+). In terms of biological role, receptor for basic fibroblast growth factor. The chain is Fibroblast growth factor receptor (FGFR) from Hydra vulgaris (Hydra).